The following is a 173-amino-acid chain: MNLEKLEVSHDADSLCVVIEISKHSNIKYELDKESGALMVDRVLYGAQNYPANYGFVPNTLGSDGDPVDALVLSDVAFQAGSVVKARLVGVLNMEDESGMDEKLIALPIDKIDPTHSYVKDIDDLSKHTLDKIKHFFETYKDLEPNKWVKVKGFENKESAIKVLEKAIKAYQG.

Positions 28, 42, and 54 each coordinate substrate. Positions 64, 69, and 101 each coordinate Mg(2+). Substrate is bound at residue Y140.

The protein belongs to the PPase family. As to quaternary structure, homohexamer. Mg(2+) serves as cofactor.

It is found in the cytoplasm. It catalyses the reaction diphosphate + H2O = 2 phosphate + H(+). Catalyzes the hydrolysis of inorganic pyrophosphate (PPi) forming two phosphate ions. In Helicobacter pylori (strain ATCC 700392 / 26695) (Campylobacter pylori), this protein is Inorganic pyrophosphatase.